The chain runs to 304 residues: Urease accessory protein UreD 2 (304 aa).

This sequence belongs to the UreD family. In terms of assembly, ureD, UreF and UreG form a complex that acts as a GTP-hydrolysis-dependent molecular chaperone, activating the urease apoprotein by helping to assemble the nickel containing metallocenter of UreC. The UreE protein probably delivers the nickel.

The protein localises to the cytoplasm. In terms of biological role, required for maturation of urease via the functional incorporation of the urease nickel metallocenter. Disrupting the ure2 operon has no effect on urease activity or pathogen survival in BALB/c mice when administered orally. In Brucella abortus (strain 2308), this protein is Urease accessory protein UreD 2.